The following is a 236-amino-acid chain: Ubiquitin carboxyl-terminal hydrolase YUH1 (236 aa).

The UCH catalytic domain maps to 7–233 (AVVPIESNPE…LNFAMLGLGP (227 aa)). The interval 10–15 (PIESNP) is interaction with ubiquitin. The active-site Nucleophile is Cys-90. Residues 149 to 157 (FSTGQSEAP) are interaction with ubiquitin. The Proton donor role is filled by His-166. The interval 219–228 (NEEDVLNFAM) is interaction with ubiquitin.

Belongs to the peptidase C12 family.

It catalyses the reaction Thiol-dependent hydrolysis of ester, thioester, amide, peptide and isopeptide bonds formed by the C-terminal Gly of ubiquitin (a 76-residue protein attached to proteins as an intracellular targeting signal).. Deubiquitinating enzyme (DUB) that controls levels of cellular ubiquitin through processing of ubiquitin precursors and ubiquitinated proteins. Thiol protease that recognizes and hydrolyzes a peptide bond at the C-terminal glycine of either ubiquitin or RUB1. Preferentially cleaves ubiquitin from peptides and small adducts. This chain is Ubiquitin carboxyl-terminal hydrolase YUH1 (YUH1), found in Saccharomyces cerevisiae (strain ATCC 204508 / S288c) (Baker's yeast).